We begin with the raw amino-acid sequence, 134 residues long: Ribosome-binding factor A (134 aa).

It belongs to the RbfA family. In terms of assembly, monomer. Binds 30S ribosomal subunits, but not 50S ribosomal subunits or 70S ribosomes.

Its subcellular location is the cytoplasm. Its function is as follows. One of several proteins that assist in the late maturation steps of the functional core of the 30S ribosomal subunit. Associates with free 30S ribosomal subunits (but not with 30S subunits that are part of 70S ribosomes or polysomes). Required for efficient processing of 16S rRNA. May interact with the 5'-terminal helix region of 16S rRNA. This chain is Ribosome-binding factor A, found in Sinorhizobium medicae (strain WSM419) (Ensifer medicae).